An 85-amino-acid chain; its full sequence is HPr-like protein Crh (85 aa).

The HPr domain maps to 1-85 (MVQQKVEVRL…KLAAYVQEEV (85 aa)). Serine 46 is modified (phosphoserine; by HPrK/P).

This sequence belongs to the HPr family. In terms of assembly, mixture of monomers and homodimers. Interacts with CcpA as a monomer.

Functionally, along with seryl-phosphorylated HPr, phosphorylated Crh is implicated in carbon catabolite repression (CCR) of levanase, inositol dehydrogenase, and beta-xylosidase. Exerts its effect on CCR by interacting with CcpA. The sequence is that of HPr-like protein Crh (crh) from Bacillus subtilis (strain 168).